The chain runs to 153 residues: Protein Smg homolog (153 aa).

This sequence belongs to the Smg family.

The chain is Protein Smg homolog from Neisseria gonorrhoeae (strain ATCC 700825 / FA 1090).